We begin with the raw amino-acid sequence, 285 residues long: Octanoyltransferase (285 aa).

Positions leucine 50–isoleucine 277 constitute a BPL/LPL catalytic domain. Substrate-binding positions include arginine 89 to histidine 96, serine 189 to glycine 191, and glycine 202 to alanine 204. Catalysis depends on cysteine 220, which acts as the Acyl-thioester intermediate.

It belongs to the LipB family.

The protein localises to the cytoplasm. The catalysed reaction is octanoyl-[ACP] + L-lysyl-[protein] = N(6)-octanoyl-L-lysyl-[protein] + holo-[ACP] + H(+). It participates in protein modification; protein lipoylation via endogenous pathway; protein N(6)-(lipoyl)lysine from octanoyl-[acyl-carrier-protein]: step 1/2. In terms of biological role, catalyzes the transfer of endogenously produced octanoic acid from octanoyl-acyl-carrier-protein onto the lipoyl domains of lipoate-dependent enzymes. Lipoyl-ACP can also act as a substrate although octanoyl-ACP is likely to be the physiological substrate. The polypeptide is Octanoyltransferase (Psychrobacter cryohalolentis (strain ATCC BAA-1226 / DSM 17306 / VKM B-2378 / K5)).